The sequence spans 398 residues: Bifunctional enzyme IspD/IspF (398 aa).

The 2-C-methyl-D-erythritol 4-phosphate cytidylyltransferase stretch occupies residues 1–237 (MSISIAAIIL…QKKMQMFPDI (237 aa)). A 2-C-methyl-D-erythritol 2,4-cyclodiphosphate synthase region spans residues 238–398 (RVGNGYDVHS…SVLYPGEIPQ (161 aa)). Residues Asp244 and His246 each contribute to the a divalent metal cation site. Residues 244–246 (DVH) and 270–271 (HS) each bind 4-CDP-2-C-methyl-D-erythritol 2-phosphate. His278 contacts a divalent metal cation. Residues 292-294 (DIG), 368-371 (TTNE), Phe375, and Arg378 contribute to the 4-CDP-2-C-methyl-D-erythritol 2-phosphate site.

This sequence in the N-terminal section; belongs to the IspD/TarI cytidylyltransferase family. IspD subfamily. The protein in the C-terminal section; belongs to the IspF family. A divalent metal cation is required as a cofactor.

The enzyme catalyses 2-C-methyl-D-erythritol 4-phosphate + CTP + H(+) = 4-CDP-2-C-methyl-D-erythritol + diphosphate. The catalysed reaction is 4-CDP-2-C-methyl-D-erythritol 2-phosphate = 2-C-methyl-D-erythritol 2,4-cyclic diphosphate + CMP. Its pathway is isoprenoid biosynthesis; isopentenyl diphosphate biosynthesis via DXP pathway; isopentenyl diphosphate from 1-deoxy-D-xylulose 5-phosphate: step 2/6. The protein operates within isoprenoid biosynthesis; isopentenyl diphosphate biosynthesis via DXP pathway; isopentenyl diphosphate from 1-deoxy-D-xylulose 5-phosphate: step 4/6. Bifunctional enzyme that catalyzes the formation of 4-diphosphocytidyl-2-C-methyl-D-erythritol from CTP and 2-C-methyl-D-erythritol 4-phosphate (MEP) (IspD), and catalyzes the conversion of 4-diphosphocytidyl-2-C-methyl-D-erythritol 2-phosphate (CDP-ME2P) to 2-C-methyl-D-erythritol 2,4-cyclodiphosphate (ME-CPP) with a corresponding release of cytidine 5-monophosphate (CMP) (IspF). This chain is Bifunctional enzyme IspD/IspF, found in Bartonella tribocorum (strain CIP 105476 / IBS 506).